The chain runs to 347 residues: Dihydroorotase (347 aa).

Zn(2+) is bound by residues H14 and H16. Residues 16-18 (HLR) and N42 each bind substrate. Zn(2+) contacts are provided by K100, H137, and H175. K100 is subject to N6-carboxylysine. H137 is a binding site for substrate. L220 is a binding site for substrate. A Zn(2+)-binding site is contributed by D248. The active site involves D248. Positions 252 and 264 each coordinate substrate.

Belongs to the metallo-dependent hydrolases superfamily. DHOase family. Class II DHOase subfamily. Homodimer. The cofactor is Zn(2+).

It carries out the reaction (S)-dihydroorotate + H2O = N-carbamoyl-L-aspartate + H(+). It participates in pyrimidine metabolism; UMP biosynthesis via de novo pathway; (S)-dihydroorotate from bicarbonate: step 3/3. Catalyzes the reversible cyclization of carbamoyl aspartate to dihydroorotate. The polypeptide is Dihydroorotase (Pseudomonas syringae pv. tomato (strain ATCC BAA-871 / DC3000)).